Reading from the N-terminus, the 462-residue chain is Acetate--CoA ligase [ADP-forming] I subunit alpha (462 aa).

This sequence belongs to the acetate CoA ligase alpha subunit family. As to quaternary structure, heterotetramer of two alpha and two beta subunits.

Its subcellular location is the cytoplasm. It carries out the reaction acetate + ATP + CoA = acetyl-CoA + ADP + phosphate. Activity is dependent on magnesium. Functionally, catalyzes the reversible formation of acetate and ATP from acetyl-CoA by using ADP and phosphate. Can use other substrates such as isobutyryl-CoA, propionyl-CoA and butyryl-CoA, but not indoleacetyl-CoA, phenylacetyl-CoA or succinyl-CoA. Seems to be involved primarily in the conversion of acetyl-CoA to acetate. Participates in the degradation of branched-chain amino acids via branched-chain-acyl-CoA esters. This is Acetate--CoA ligase [ADP-forming] I subunit alpha from Pyrococcus furiosus (strain ATCC 43587 / DSM 3638 / JCM 8422 / Vc1).